A 389-amino-acid chain; its full sequence is NAD-dependent protein deacetylase sirtuin-2 (389 aa).

The disordered stretch occupies residues 1–34 (MAEPDPSDPLETQAGKVQEAQDSDSDTEGGATGG). Ala2 bears the N-acetylalanine mark. Phosphoserine occurs at positions 23 and 25. The residue at position 27 (Thr27) is a Phosphothreonine. Residues 41 to 51 (LRNLFTQTLGL) carry the Nuclear export signal motif. Phosphoserine is present on Ser53. Positions 57-338 (RLLDELTLEG…LALADLLGWK (282 aa)) constitute a Deacetylase sirtuin-type domain. NAD(+) is bound by residues 85-89 (AGIST) and 95-97 (DFR). Ser100 is subject to Phosphoserine. 167–170 (QNID) is a binding site for NAD(+). His187 functions as the Proton acceptor in the catalytic mechanism. Zn(2+)-binding residues include Cys195, Cys200, Cys221, and Cys224. NAD(+) is bound by residues 262 to 263 (TS), 286 to 288 (NKE), and Cys324. The disordered stretch occupies residues 350-389 (ANIDAQSGSQAPNPSTTISPGKSPPPAKEAARTKEKEEQQ). Positions 353–369 (DAQSGSQAPNPSTTISP) are enriched in polar residues. Phosphoserine is present on residues Ser368 and Ser372. Basic and acidic residues predominate over residues 378-389 (EAARTKEKEEQQ).

The protein belongs to the sirtuin family. Class I subfamily. In terms of assembly, interacts with CDC20, FOXO3 and FZR1. Associates with microtubule in primary cortical mature neurons. Homotrimer. Interacts (via both phosphorylated, unphosphorylated, active or inactive forms) with HDAC6; the interaction is necessary for the complex to interact with alpha-tubulin, suggesting that these proteins belong to a large complex that deacetylates the cytoskeleton. Interacts with FOXO1; the interaction is disrupted upon serum-starvation or oxidative stress, leading to increased level of acetylated FOXO1 and induction of autophagy. Interacts with RELA; the interaction occurs in the cytoplasm and is increased in a TNF-alpha-dependent manner. Interacts with HOXA10; the interaction is direct. Interacts with YWHAB and YWHAG; the interactions occur in a AKT-dependent manner and increase SIRT2-dependent TP53 deacetylation. Interacts with MAPK1/ERK2 and MAPK3/ERK1; the interactions increase SIRT2 stability and deacetylation activity. Interacts (phosphorylated form) with KMT5A isoform 2; the interaction is direct, stimulates KMT5A-mediated methyltransferase activity on histone at 'Lys-20' (H4K20me1) and is increased in a H(2)O(2)-induced oxidative stress-dependent manner. Interacts with G6PD; the interaction is enhanced by H(2)O(2) treatment. Interacts with a G1/S-specific cyclin E-CDK2 complex. Interacts with AURKA, CDK5R1 (p35 form) and CDK5 and HIF1A. Interacts with the tRNA ligase SARS1; recruited to the VEGFA promoter via interaction with SARS1. Isoform 2 and isoform 4 associate with microtubules in primary cortical mature neurons. Interacts with BEX4; negatively regulates alpha-tubulin deacetylation by SIRT2. Zn(2+) serves as cofactor. Phosphorylated at phosphoserine and phosphothreonine. Phosphorylated at Ser-368 by a mitotic kinase CDK1/cyclin B at the G2/M transition; phosphorylation regulates the delay in cell-cycle progression. Phosphorylated at Ser-368 by a mitotic kinase G1/S-specific cyclin E/Cdk2 complex; phosphorylation inactivates SIRT2-mediated alpha-tubulin deacetylation and thereby negatively regulates cell adhesion, cell migration and neurite outgrowth during neuronal differentiation. Phosphorylated by cyclin A/Cdk2 and p35-Cdk5 complexes and to a lesser extent by the cyclin D3/Cdk4 and cyclin B/Cdk1, in vitro. Dephosphorylated at Ser-368 by CDC14A and CDC14B around early anaphase. Post-translationally, acetylated by EP300; acetylation leads both to the decreased of SIRT2-mediated alpha-tubulin deacetylase activity and SIRT2-mediated down-regulation of TP53 transcriptional activity. In terms of processing, ubiquitinated. As to expression, isoform 1 is weakly expressed in the cortex at postnatal(P) days P1, P3 and P7, and increases progressively between P17 and older adult cortex. Isoform 1 is also expressed in heart, liver and skeletal muscle, weakly expressed in the striatum and spinal cord. Isoform 2 is not expressed in the cortex at P1, P3 and P7, and increases strongly and progressively between P17 and older adult cortex. Isoform 2 is also expressed in the heart, liver, striatum and spinal cord. Isoform 4 is weakly expressed in older adult cortex and spinal cords. Expressed in the cortex. Expressed in postnatal sciatic nerves during myelination and during remyelination after nerve injury. Expressed in neurons, oligodendrocytes, Schwann cells, Purkinje cells and in astrocytes of white matter. Strongly expressed in preadipocytes compared with differentiated adipocytes. Expressed in cerebellar granule cells. Expressed in the inner ear: in the cochlea, expressed in types I and V fibrocytes in the spiral ligament (SL) and slightly in stria vascularis (SV); in the organ of Corti, expressed in some supporting cells; in the crista ampullaris, expressed in spiral ganglion cells; also expressed in the endolymphatic sac (ES) epithelial cells (at protein level). Expressed in the brain, spinal cord, optic nerve and hippocampus. Strongly expressed in 6-8 week-old ovulated meiosis II oocytes and weakly expressed in 45-58 week-old ovulated meiosis II oocytes. Expressed in the cochlea, vestibule and acoustic nerve of the inner ear.

Its subcellular location is the nucleus. The protein localises to the cytoplasm. It localises to the perinuclear region. It is found in the perikaryon. The protein resides in the cytoskeleton. Its subcellular location is the cell projection. The protein localises to the growth cone. It localises to the myelin membrane. It is found in the microtubule organizing center. The protein resides in the centrosome. Its subcellular location is the spindle. The protein localises to the chromosome. It localises to the midbody. It is found in the centriole. It catalyses the reaction N(6)-acetyl-L-lysyl-[protein] + NAD(+) + H2O = 2''-O-acetyl-ADP-D-ribose + nicotinamide + L-lysyl-[protein]. The enzyme catalyses N(6)-tetradecanoyl-L-lysyl-[protein] + NAD(+) + H2O = 2''-O-tetradecanoyl-ADP-D-ribose + nicotinamide + L-lysyl-[protein]. The catalysed reaction is N(6)-hexadecanoyl-L-lysyl-[protein] + NAD(+) + H2O = 2''-O-hexadecanoyl-ADP-D-ribose + nicotinamide + L-lysyl-[protein]. Its activity is regulated as follows. Inhibited by Sirtinol, A3 and M15 small molecules. Inhibited by nicotinamide. Inhibited by a macrocyclic peptide inhibitor S2iL5. Inhibited by EP300-induced acetylation. In terms of biological role, NAD-dependent protein deacetylase, which deacetylates internal lysines on histone and alpha-tubulin as well as many other proteins such as key transcription factors. Participates in the modulation of multiple and diverse biological processes such as cell cycle control, genomic integrity, microtubule dynamics, cell differentiation, metabolic networks, and autophagy. Plays a major role in the control of cell cycle progression and genomic stability. Functions in the antephase checkpoint preventing precocious mitotic entry in response to microtubule stress agents, and hence allowing proper inheritance of chromosomes. Positively regulates the anaphase promoting complex/cyclosome (APC/C) ubiquitin ligase complex activity by deacetylating CDC20 and FZR1, then allowing progression through mitosis. Associates both with chromatin at transcriptional start sites (TSSs) and enhancers of active genes. Plays a role in cell cycle and chromatin compaction through epigenetic modulation of the regulation of histone H4 'Lys-20' methylation (H4K20me1) during early mitosis. Specifically deacetylates histone H4 at 'Lys-16' (H4K16ac) between the G2/M transition and metaphase enabling H4K20me1 deposition by KMT5A leading to ulterior levels of H4K20me2 and H4K20me3 deposition throughout cell cycle, and mitotic S-phase progression. Deacetylates KMT5A modulating KMT5A chromatin localization during the mitotic stress response. Also deacetylates histone H3 at 'Lys-57' (H3K56ac) during the mitotic G2/M transition. During oocyte meiosis progression, may deacetylate histone H4 at 'Lys-16' (H4K16ac) and alpha-tubulin, regulating spindle assembly and chromosome alignment by influencing microtubule dynamics and kinetochore function. Deacetylates histone H4 at 'Lys-16' (H4K16ac) at the VEGFA promoter and thereby contributes to regulate expression of VEGFA, a key regulator of angiogenesis. Deacetylates alpha-tubulin at 'Lys-40' and hence controls neuronal motility, oligodendroglial cell arbor projection processes and proliferation of non-neuronal cells. Phosphorylation at Ser-368 by a G1/S-specific cyclin E-CDK2 complex inactivates SIRT2-mediated alpha-tubulin deacetylation, negatively regulating cell adhesion, cell migration and neurite outgrowth during neuronal differentiation. Deacetylates PARD3 and participates in the regulation of Schwann cell peripheral myelination formation during early postnatal development and during postinjury remyelination. Involved in several cellular metabolic pathways. Plays a role in the regulation of blood glucose homeostasis by deacetylating and stabilizing phosphoenolpyruvate carboxykinase PCK1 activity in response to low nutrient availability. Acts as a key regulator in the pentose phosphate pathway (PPP) by deacetylating and activating the glucose-6-phosphate G6PD enzyme, and therefore, stimulates the production of cytosolic NADPH to counteract oxidative damage. Maintains energy homeostasis in response to nutrient deprivation as well as energy expenditure by inhibiting adipogenesis and promoting lipolysis. Attenuates adipocyte differentiation by deacetylating and promoting FOXO1 interaction to PPARG and subsequent repression of PPARG-dependent transcriptional activity. Plays a role in the regulation of lysosome-mediated degradation of protein aggregates by autophagy in neuronal cells. Deacetylates FOXO1 in response to oxidative stress or serum deprivation, thereby negatively regulating FOXO1-mediated autophagy. Deacetylates a broad range of transcription factors and co-regulators regulating target gene expression. Deacetylates transcriptional factor FOXO3 stimulating the ubiquitin ligase SCF(SKP2)-mediated FOXO3 ubiquitination and degradation. Deacetylates HIF1A and therefore promotes HIF1A degradation and inhibition of HIF1A transcriptional activity in tumor cells in response to hypoxia. Deacetylates RELA in the cytoplasm inhibiting NF-kappaB-dependent transcription activation upon TNF-alpha stimulation. Inhibits transcriptional activation by deacetylating p53/TP53 and EP300. Also deacetylates EIF5A. Functions as a negative regulator on oxidative stress-tolerance in response to anoxia-reoxygenation conditions. Plays a role as tumor suppressor. In addition to protein deacetylase activity, also has activity toward long-chain fatty acyl groups and mediates protein-lysine demyristoylation and depalmitoylation of target proteins, such as ARF6 and KRAS, thereby regulating their association with membranes. Functionally, deacetylates alpha-tubulin. This chain is NAD-dependent protein deacetylase sirtuin-2 (Sirt2), found in Mus musculus (Mouse).